The sequence spans 236 residues: Ubiquinone biosynthesis O-methyltransferase (236 aa).

Residues arginine 39, glycine 59, aspartate 80, and methionine 124 each coordinate S-adenosyl-L-methionine.

The protein belongs to the methyltransferase superfamily. UbiG/COQ3 family.

The enzyme catalyses a 3-demethylubiquinol + S-adenosyl-L-methionine = a ubiquinol + S-adenosyl-L-homocysteine + H(+). It catalyses the reaction a 3-(all-trans-polyprenyl)benzene-1,2-diol + S-adenosyl-L-methionine = a 2-methoxy-6-(all-trans-polyprenyl)phenol + S-adenosyl-L-homocysteine + H(+). It participates in cofactor biosynthesis; ubiquinone biosynthesis. In terms of biological role, O-methyltransferase that catalyzes the 2 O-methylation steps in the ubiquinone biosynthetic pathway. The protein is Ubiquinone biosynthesis O-methyltransferase of Shewanella halifaxensis (strain HAW-EB4).